A 102-amino-acid chain; its full sequence is Protein 108 (102 aa).

An N-terminal signal peptide occupies residues 1–30 (MASVKSSSSSSSSSFISLLLLILLVIVLQS). Cystine bridges form between Cys-41/Cys-77, Cys-51/Cys-66, Cys-67/Cys-92, and Cys-79/Cys-99.

It belongs to the A9/FIL1 family. As to expression, stamen- and tapetum-specific.

It localises to the secreted. This is Protein 108 from Solanum lycopersicum (Tomato).